We begin with the raw amino-acid sequence, 485 residues long: uncharacterized protein (485 aa).

Residues 151–201 are disordered; that stretch reads IKAPTNNSQSGDGNGGTNNDNLLGTFDIREKSNGKKGESNGKQGNGQDKKT. Residues 155–174 show a composition bias toward low complexity; sequence TNNSQSGDGNGGTNNDNLLG. A compositionally biased stretch (basic and acidic residues) spans 177 to 189; that stretch reads DIREKSNGKKGES.

This sequence belongs to the MG185/MG260 family.

This is an uncharacterized protein from Mycoplasma pneumoniae (strain ATCC 29342 / M129 / Subtype 1) (Mycoplasmoides pneumoniae).